A 504-amino-acid chain; its full sequence is Cytochrome P450 2D10 (504 aa).

At Ser-249 the chain carries Phosphoserine. Cys-446 is a heme binding site.

Belongs to the cytochrome P450 family. The cofactor is heme.

It localises to the endoplasmic reticulum membrane. Its subcellular location is the microsome membrane. The enzyme catalyses an organic molecule + reduced [NADPH--hemoprotein reductase] + O2 = an alcohol + oxidized [NADPH--hemoprotein reductase] + H2O + H(+). Functionally, cytochromes P450 are a group of heme-thiolate monooxygenases. In liver microsomes, this enzyme is involved in an NADPH-dependent electron transport pathway. It oxidizes a variety of structurally unrelated compounds, including steroids, fatty acids, and xenobiotics. The sequence is that of Cytochrome P450 2D10 (Cyp2d10) from Mus musculus (Mouse).